A 1235-amino-acid chain; its full sequence is ATP-dependent helicase/nuclease subunit A (1235 aa).

Residues 12–482 (SLWTDDQWKA…IDLSQNFRSR (471 aa)) enclose the UvrD-like helicase ATP-binding domain. 33 to 40 (AAAGSGKT) contributes to the ATP binding site. Positions 509–800 (AAELTLGAKS…RMMTIHASKG (292 aa)) constitute a UvrD-like helicase C-terminal domain.

Belongs to the helicase family. AddA subfamily. As to quaternary structure, heterodimer of AddA and AddB/RexB. Mg(2+) is required as a cofactor.

It catalyses the reaction Couples ATP hydrolysis with the unwinding of duplex DNA by translocating in the 3'-5' direction.. The enzyme catalyses ATP + H2O = ADP + phosphate + H(+). Functionally, the heterodimer acts as both an ATP-dependent DNA helicase and an ATP-dependent, dual-direction single-stranded exonuclease. Recognizes the chi site generating a DNA molecule suitable for the initiation of homologous recombination. The AddA nuclease domain is required for chi fragment generation; this subunit has the helicase and 3' -&gt; 5' nuclease activities. The protein is ATP-dependent helicase/nuclease subunit A of Listeria monocytogenes serotype 4a (strain HCC23).